We begin with the raw amino-acid sequence, 235 residues long: CD-NTase-associated protein 13 (235 aa).

The next 2 helical transmembrane spans lie at 14-34 (IVHH…LIWI) and 45-65 (IIFT…IVGL).

It in the C-terminal section; belongs to the bacterial STING family. In terms of assembly, homodimer.

The protein localises to the cell inner membrane. Functionally, effector protein of a CBASS antivirus system. CBASS (cyclic oligonucleotide-based antiphage signaling system) provides immunity against bacteriophage. The CD-NTase protein synthesizes cyclic nucleotides in response to infection; these serve as specific second messenger signals. The signals activate a diverse range of effectors, leading to bacterial cell death and thus abortive phage infection. A type I-D(GG) CBASS system. Its function is as follows. Binds cyclic dinucleotides: binds c-di-GMP (synthesized by the cognate CdnE encoded upstream in the same operon), cyclic 3'3'-cyclic GMP-AMP (3'3'-cGAMP) but not cUMP-AMP. The effector protein for this CBASS system, its activity is stimulated by c-di-GMP and leads to cell death. The polypeptide is CD-NTase-associated protein 13 (Flavobacteriaceae sp. genome_bin_11).